We begin with the raw amino-acid sequence, 409 residues long: Carbamoyl phosphate synthase arginine-specific small chain (409 aa).

The Glutamine amidotransferase type-1 domain maps to 197-389; that stretch reads NVALIDCGVK…FDNMSQYRAL (193 aa). Cysteine 277 acts as the Nucleophile in catalysis. Catalysis depends on residues histidine 362 and glutamate 364.

This sequence belongs to the CarA family. In terms of assembly, heterodimer composed of 2 chains; the small (or glutamine) chain promotes the hydrolysis of glutamine to ammonia, which is used by the large (or ammonia) chain to synthesize carbamoyl phosphate.

The protein resides in the cytoplasm. The enzyme catalyses hydrogencarbonate + L-glutamine + 2 ATP + H2O = carbamoyl phosphate + L-glutamate + 2 ADP + phosphate + 2 H(+). It carries out the reaction L-glutamine + H2O = L-glutamate + NH4(+). It participates in amino-acid biosynthesis; L-arginine biosynthesis; carbamoyl phosphate from bicarbonate: step 1/1. Small subunit of the arginine-specific carbamoyl phosphate synthase (CPSase). CPSase catalyzes the formation of carbamoyl phosphate from the ammonia moiety of glutamine, carbonate, and phosphate donated by ATP, constituting the first step of 2 biosynthetic pathways, one leading to arginine and/or urea and the other to pyrimidine nucleotides. The small subunit (glutamine amidotransferase) binds and cleaves glutamine to supply the large subunit with the substrate ammonia. This Kluyveromyces lactis (strain ATCC 8585 / CBS 2359 / DSM 70799 / NBRC 1267 / NRRL Y-1140 / WM37) (Yeast) protein is Carbamoyl phosphate synthase arginine-specific small chain (CPA1).